A 103-amino-acid polypeptide reads, in one-letter code: Large ribosomal subunit protein bL21 (103 aa).

The protein belongs to the bacterial ribosomal protein bL21 family. As to quaternary structure, part of the 50S ribosomal subunit. Contacts protein L20.

This protein binds to 23S rRNA in the presence of protein L20. The chain is Large ribosomal subunit protein bL21 from Mycobacterium marinum (strain ATCC BAA-535 / M).